Consider the following 148-residue polypeptide: Holo-[acyl-carrier-protein] synthase (148 aa).

Positions 9 and 63 each coordinate Mg(2+).

This sequence belongs to the P-Pant transferase superfamily. AcpS family. It depends on Mg(2+) as a cofactor.

It localises to the cytoplasm. It catalyses the reaction apo-[ACP] + CoA = holo-[ACP] + adenosine 3',5'-bisphosphate + H(+). Functionally, transfers the 4'-phosphopantetheine moiety from coenzyme A to a Ser of acyl-carrier-protein. In Burkholderia cenocepacia (strain HI2424), this protein is Holo-[acyl-carrier-protein] synthase.